A 723-amino-acid polypeptide reads, in one-letter code: BBSome complex assembly protein BBS10 (723 aa).

It belongs to the TCP-1 chaperonin family. Component of a complex composed at least of MKKS, BBS10, BBS12, TCP1, CCT2, CCT3, CCT4, CCT5 and CCT8.

The protein resides in the cell projection. It localises to the cilium. Its function is as follows. Probable molecular chaperone that assists the folding of proteins upon ATP hydrolysis. Plays a role in the assembly of BBSome, a complex involved in ciliogenesis regulating transports vesicles to the cilia. Involved in adipogenic differentiation. This chain is BBSome complex assembly protein BBS10 (BBS10), found in Pongo abelii (Sumatran orangutan).